A 379-amino-acid chain; its full sequence is Alcohol dehydrogenase 2 (379 aa).

Cys47, Thr49, His69, Cys99, Cys102, Cys105, Cys113, and Cys177 together coordinate Zn(2+). An alcohol contacts are provided by Thr49 and His69. Residue Thr49 participates in NAD(+) binding. NAD(+) contacts are provided by residues 202 to 207 (GLGAVG), Asp226, Lys231, Thr272, Val295, 295 to 297 (VGV), Phe322, and Arg372.

The protein belongs to the zinc-containing alcohol dehydrogenase family. Homodimer. Requires Zn(2+) as cofactor.

The protein resides in the cytoplasm. It catalyses the reaction a primary alcohol + NAD(+) = an aldehyde + NADH + H(+). It carries out the reaction a secondary alcohol + NAD(+) = a ketone + NADH + H(+). This is Alcohol dehydrogenase 2 (ADH2) from Zea mays (Maize).